The sequence spans 627 residues: Phosphomethylpyrimidine synthase (627 aa).

Positions 1-21 (MSAQQQKNLSESAQVDQQSVQ) are enriched in polar residues. The tract at residues 1 to 32 (MSAQQQKNLSESAQVDQQSVQPFPRSQKVYVQ) is disordered. Residues Asn231, Met260, Tyr289, His325, 345 to 347 (SRG), 386 to 389 (DGLR), and Glu425 contribute to the substrate site. Zn(2+) is bound at residue His429. Tyr452 lines the substrate pocket. His493 contacts Zn(2+). Cys573, Cys576, and Cys581 together coordinate [4Fe-4S] cluster.

Belongs to the ThiC family. In terms of assembly, homodimer. Requires [4Fe-4S] cluster as cofactor.

It catalyses the reaction 5-amino-1-(5-phospho-beta-D-ribosyl)imidazole + S-adenosyl-L-methionine = 4-amino-2-methyl-5-(phosphooxymethyl)pyrimidine + CO + 5'-deoxyadenosine + formate + L-methionine + 3 H(+). It functions in the pathway cofactor biosynthesis; thiamine diphosphate biosynthesis. Functionally, catalyzes the synthesis of the hydroxymethylpyrimidine phosphate (HMP-P) moiety of thiamine from aminoimidazole ribotide (AIR) in a radical S-adenosyl-L-methionine (SAM)-dependent reaction. The sequence is that of Phosphomethylpyrimidine synthase from Ectopseudomonas mendocina (strain ymp) (Pseudomonas mendocina).